The primary structure comprises 343 residues: Phosphoribosylformylglycinamidine cyclo-ligase (343 aa).

The protein belongs to the AIR synthase family.

The protein resides in the cytoplasm. It carries out the reaction 2-formamido-N(1)-(5-O-phospho-beta-D-ribosyl)acetamidine + ATP = 5-amino-1-(5-phospho-beta-D-ribosyl)imidazole + ADP + phosphate + H(+). It functions in the pathway purine metabolism; IMP biosynthesis via de novo pathway; 5-amino-1-(5-phospho-D-ribosyl)imidazole from N(2)-formyl-N(1)-(5-phospho-D-ribosyl)glycinamide: step 2/2. The sequence is that of Phosphoribosylformylglycinamidine cyclo-ligase from Carboxydothermus hydrogenoformans (strain ATCC BAA-161 / DSM 6008 / Z-2901).